A 931-amino-acid chain; its full sequence is Translation initiation factor IF-2 (931 aa).

The interval Lys32–Ala310 is disordered. Positions Phe50–Ser59 are enriched in polar residues. The segment covering Pro82–Pro96 has biased composition (pro residues). Residues Gly156–Ala168 are compositionally biased toward low complexity. Gly residues-rich tracts occupy residues Arg217 to Lys238, Gly248 to Gly271, and Ala281 to Gly298. The tr-type G domain maps to Pro424–Asp596. The G1 stretch occupies residues Gly433–Thr440. Gly433 to Thr440 contributes to the GTP binding site. Positions Gly458–Arg462 are G2. The segment at Asp483–Gly486 is G3. Residues Asp483–His487 and Asn537–Asp540 each bind GTP. The segment at Asn537–Asp540 is G4. Residues Ser573 to Lys575 are G5.

This sequence belongs to the TRAFAC class translation factor GTPase superfamily. Classic translation factor GTPase family. IF-2 subfamily.

It localises to the cytoplasm. Its function is as follows. One of the essential components for the initiation of protein synthesis. Protects formylmethionyl-tRNA from spontaneous hydrolysis and promotes its binding to the 30S ribosomal subunits. Also involved in the hydrolysis of GTP during the formation of the 70S ribosomal complex. This Bifidobacterium adolescentis (strain ATCC 15703 / DSM 20083 / NCTC 11814 / E194a) protein is Translation initiation factor IF-2.